We begin with the raw amino-acid sequence, 311 residues long: Methionyl-tRNA formyltransferase (311 aa).

110 to 113 contacts (6S)-5,6,7,8-tetrahydrofolate; the sequence is SLLP.

This sequence belongs to the Fmt family.

It catalyses the reaction L-methionyl-tRNA(fMet) + (6R)-10-formyltetrahydrofolate = N-formyl-L-methionyl-tRNA(fMet) + (6S)-5,6,7,8-tetrahydrofolate + H(+). Functionally, attaches a formyl group to the free amino group of methionyl-tRNA(fMet). The formyl group appears to play a dual role in the initiator identity of N-formylmethionyl-tRNA by promoting its recognition by IF2 and preventing the misappropriation of this tRNA by the elongation apparatus. The sequence is that of Methionyl-tRNA formyltransferase from Streptococcus pyogenes serotype M28 (strain MGAS6180).